The primary structure comprises 79 residues: Defensin-like protein 272 (79 aa).

The N-terminal stretch at 1 to 24 (MSSKIKFVALLIVVISLLLNNAQS) is a signal peptide. 4 cysteine pairs are disulfide-bonded: Cys34/Cys77, Cys43/Cys63, Cys49/Cys75, and Cys53/Cys76.

It belongs to the DEFL family.

The protein localises to the secreted. This is Defensin-like protein 272 from Arabidopsis thaliana (Mouse-ear cress).